The primary structure comprises 869 residues: 1-phosphatidylinositol 4,5-bisphosphate phosphodiesterase 1 (869 aa).

Residues 269–304 (VSTGQLLEFFQLADINHNGLLNYFEFEKFIKILKNR) form the EF-hand domain. Asp-282, Asn-284, Asn-286, and Glu-293 together coordinate Ca(2+). Residues 382–520 (YSKPLNHYFI…LKHKILLKSK (139 aa)) form the PI-PLC X-box domain. Catalysis depends on residues His-395 and His-439. Positions 518 and 520 each coordinate substrate. Residues 546–571 (ANEQELRMKDDSTNSSSATNSSSMQR) form a disordered region. A compositionally biased stretch (low complexity) spans 558 to 568 (TNSSSATNSSS). Residues 590-709 (ISGIHGIKFR…SGYVLKPKKL (120 aa)) form the PI-PLC Y-box domain. The substrate site is built by Ser-614 and Arg-643. Positions 713-862 (VTKAKMIPLI…EGEQYIFCTL (150 aa)) constitute a C2 domain.

In terms of assembly, interacts with SGD1. The cofactor is Ca(2+).

It carries out the reaction a 1,2-diacyl-sn-glycero-3-phospho-(1D-myo-inositol-4,5-bisphosphate) + H2O = 1D-myo-inositol 1,4,5-trisphosphate + a 1,2-diacyl-sn-glycerol + H(+). The production of the second messenger molecules diacylglycerol (DAG) and inositol 1,4,5-trisphosphate (IP3) is mediated by activated phosphatidylinositol-specific phospholipase C enzymes. Required for cell growth, osmoresistance and expression of GPD1. This Saccharomyces cerevisiae (strain ATCC 204508 / S288c) (Baker's yeast) protein is 1-phosphatidylinositol 4,5-bisphosphate phosphodiesterase 1 (PLC1).